We begin with the raw amino-acid sequence, 302 residues long: Methionyl-tRNA formyltransferase (302 aa).

108 to 111 (SLLP) is a binding site for (6S)-5,6,7,8-tetrahydrofolate. Over residues 279 to 288 (KRPMEPEEFL) the composition is skewed to basic and acidic residues. A disordered region spans residues 279-302 (KRPMEPEEFLRGFPLPEGSRAHTS).

The protein belongs to the Fmt family.

The catalysed reaction is L-methionyl-tRNA(fMet) + (6R)-10-formyltetrahydrofolate = N-formyl-L-methionyl-tRNA(fMet) + (6S)-5,6,7,8-tetrahydrofolate + H(+). Attaches a formyl group to the free amino group of methionyl-tRNA(fMet). The formyl group appears to play a dual role in the initiator identity of N-formylmethionyl-tRNA by promoting its recognition by IF2 and preventing the misappropriation of this tRNA by the elongation apparatus. This is Methionyl-tRNA formyltransferase from Cereibacter sphaeroides (strain ATCC 17023 / DSM 158 / JCM 6121 / CCUG 31486 / LMG 2827 / NBRC 12203 / NCIMB 8253 / ATH 2.4.1.) (Rhodobacter sphaeroides).